Here is a 496-residue protein sequence, read N- to C-terminus: Probable glycine dehydrogenase (decarboxylating) subunit 2 (496 aa).

The residue at position 265 (lysine 265) is an N6-(pyridoxal phosphate)lysine.

This sequence belongs to the GcvP family. C-terminal subunit subfamily. In terms of assembly, the glycine cleavage system is composed of four proteins: P, T, L and H. In this organism, the P 'protein' is a heterodimer of two subunits. The cofactor is pyridoxal 5'-phosphate.

It catalyses the reaction N(6)-[(R)-lipoyl]-L-lysyl-[glycine-cleavage complex H protein] + glycine + H(+) = N(6)-[(R)-S(8)-aminomethyldihydrolipoyl]-L-lysyl-[glycine-cleavage complex H protein] + CO2. The glycine cleavage system catalyzes the degradation of glycine. The P protein binds the alpha-amino group of glycine through its pyridoxal phosphate cofactor; CO(2) is released and the remaining methylamine moiety is then transferred to the lipoamide cofactor of the H protein. This is Probable glycine dehydrogenase (decarboxylating) subunit 2 from Thioalkalivibrio sulfidiphilus (strain HL-EbGR7).